Consider the following 151-residue polypeptide: D-aminoacyl-tRNA deacylase (151 aa).

The Gly-cisPro motif, important for rejection of L-amino acids motif lies at 139 to 140 (GP).

The protein belongs to the DTD family. Homodimer.

The protein localises to the cytoplasm. It catalyses the reaction glycyl-tRNA(Ala) + H2O = tRNA(Ala) + glycine + H(+). The enzyme catalyses a D-aminoacyl-tRNA + H2O = a tRNA + a D-alpha-amino acid + H(+). An aminoacyl-tRNA editing enzyme that deacylates mischarged D-aminoacyl-tRNAs. Also deacylates mischarged glycyl-tRNA(Ala), protecting cells against glycine mischarging by AlaRS. Acts via tRNA-based rather than protein-based catalysis; rejects L-amino acids rather than detecting D-amino acids in the active site. By recycling D-aminoacyl-tRNA to D-amino acids and free tRNA molecules, this enzyme counteracts the toxicity associated with the formation of D-aminoacyl-tRNA entities in vivo and helps enforce protein L-homochirality. In Symbiobacterium thermophilum (strain DSM 24528 / JCM 14929 / IAM 14863 / T), this protein is D-aminoacyl-tRNA deacylase.